A 208-amino-acid chain; its full sequence is Small ribosomal subunit protein uS4 (208 aa).

The S4 RNA-binding domain maps to 98-161 (QRLDNVVYRM…KNNPQIVRAI (64 aa)).

This sequence belongs to the universal ribosomal protein uS4 family. As to quaternary structure, part of the 30S ribosomal subunit. Contacts protein S5. The interaction surface between S4 and S5 is involved in control of translational fidelity.

In terms of biological role, one of the primary rRNA binding proteins, it binds directly to 16S rRNA where it nucleates assembly of the body of the 30S subunit. Functionally, with S5 and S12 plays an important role in translational accuracy. The sequence is that of Small ribosomal subunit protein uS4 from Campylobacter concisus (strain 13826).